The chain runs to 93 residues: Protein YzgL (93 aa).

The protein is Protein YzgL (yzgL) of Escherichia coli (strain K12).